The following is a 93-amino-acid chain: uncharacterized protein (93 aa).

The first 22 residues, 1–22 (MNKYWLSGIIFLAYGLASPAFS), serve as a signal peptide directing secretion.

This is an uncharacterized protein from Escherichia coli (strain K12).